A 372-amino-acid polypeptide reads, in one-letter code: MHNQAPIQRRKSTRIYVGNVPIGDGAPIAVQSMTNTRTTDVEATVNQIKALERVGADIVRVSVPTMDAAEAFKLIKQRVNVPLVADIHFDYRIALKVAEYGVDCLRINPGNIGNEERIRMVVDCARDKNIPIRIGVNAGSLEKDLQEKYGEPTPQALLESAMRHVDHLDRLNFDQFKVSVKASDVFLAVESYRLLAKQIDQPLHLGITEAGGARSGAVKSAIGLGLLLSEGIGDTLRVSLAADPVEEIKVGFDILKSLRIRSRGINFIACPTCSRQEFDVIGTVNALEQRLEDIITPMDVSIIGCVVNGPGEALVSTLGVTGGNKKSGLYEDGVRKDRLDNNDMIDQLEARIRAKASQLDEARRIDVQQVEK.

4 residues coordinate [4Fe-4S] cluster: cysteine 270, cysteine 273, cysteine 305, and glutamate 312.

It belongs to the IspG family. Requires [4Fe-4S] cluster as cofactor.

It carries out the reaction (2E)-4-hydroxy-3-methylbut-2-enyl diphosphate + oxidized [flavodoxin] + H2O + 2 H(+) = 2-C-methyl-D-erythritol 2,4-cyclic diphosphate + reduced [flavodoxin]. The protein operates within isoprenoid biosynthesis; isopentenyl diphosphate biosynthesis via DXP pathway; isopentenyl diphosphate from 1-deoxy-D-xylulose 5-phosphate: step 5/6. In terms of biological role, converts 2C-methyl-D-erythritol 2,4-cyclodiphosphate (ME-2,4cPP) into 1-hydroxy-2-methyl-2-(E)-butenyl 4-diphosphate. In Escherichia coli O9:H4 (strain HS), this protein is 4-hydroxy-3-methylbut-2-en-1-yl diphosphate synthase (flavodoxin).